The primary structure comprises 287 residues: Elongation factor Ts (287 aa).

The segment at Thr80–Leu83 is involved in Mg(2+) ion dislocation from EF-Tu.

This sequence belongs to the EF-Ts family.

It is found in the cytoplasm. Functionally, associates with the EF-Tu.GDP complex and induces the exchange of GDP to GTP. It remains bound to the aminoacyl-tRNA.EF-Tu.GTP complex up to the GTP hydrolysis stage on the ribosome. This Ectopseudomonas mendocina (strain ymp) (Pseudomonas mendocina) protein is Elongation factor Ts.